The following is a 499-amino-acid chain: Protein singed wings 2 (499 aa).

An N-terminal signal peptide occupies residues 1-29 (MPSGVFQKRPKAAETISLFCMILIRLSRA). 2 LRR repeats span residues 154–175 (ELHT…TFKR) and 178–199 (PLKV…LLLP). One can recognise an LRRCT 1 domain in the interval 210–265 (NPWNCTRNFKWLLLQPEKGRLVVDRDELICTDRKYKERQMLMVMHYKLELKRQCQS). LRR repeat units follow at residues 307-328 (NTTT…RDNP), 332-353 (HVVD…EDTY), and 357-378 (NFRL…ALDN). In terms of domain architecture, LRRCT 2 spans 394–449 (NPWHCTCKFGSRMRELLTKYKDIVRDAWNVSCTYRLDDDQLLAKVLTLSRQEMCNL).

Functionally, has a role in the ecdysone induced cascade; probably indirect control of 'late' ecdysone genes. The sequence is that of Protein singed wings 2 from Drosophila melanogaster (Fruit fly).